The chain runs to 360 residues: Olfactory receptor 1L1 (360 aa).

Topologically, residues M1 to K75 are extracellular. The N-linked (GlcNAc...) asparagine glycan is linked to N55. Residues P76–I99 form a helical membrane-spanning segment. The Cytoplasmic portion of the chain corresponds to R100–T107. A helical transmembrane segment spans residues P108 to P129. Over K130–Q150 the chain is Extracellular. A disulfide bridge connects residues C147 and C239. The chain crosses the membrane as a helical span at residues M151 to I170. Over D171–R189 the chain is Cytoplasmic. A helical membrane pass occupies residues C190–L208. Residues H209–E246 lie on the Extracellular side of the membrane. Residues I247–L269 traverse the membrane as a helical segment. The Cytoplasmic portion of the chain corresponds to R270–K286. Residues A287 to Y309 traverse the membrane as a helical segment. At F310–Q321 the chain is on the extracellular side. The N-linked (GlcNAc...) asparagine glycan is linked to N315. A helical membrane pass occupies residues I322 to L341. At R342–Q360 the chain is on the cytoplasmic side.

The protein belongs to the G-protein coupled receptor 1 family.

Its subcellular location is the cell membrane. Its function is as follows. Odorant receptor. This is Olfactory receptor 1L1 (OR1L1) from Homo sapiens (Human).